A 532-amino-acid polypeptide reads, in one-letter code: 2,3-bisphosphoglycerate-independent phosphoglycerate mutase (532 aa).

Mn(2+) contacts are provided by aspartate 15 and serine 65. Catalysis depends on serine 65, which acts as the Phosphoserine intermediate. Substrate contacts are provided by residues histidine 126, 156-157 (RD), arginine 188, arginine 194, 258-261 (RPDR), and lysine 331. Residues aspartate 398, histidine 402, aspartate 439, histidine 440, and histidine 457 each coordinate Mn(2+).

It belongs to the BPG-independent phosphoglycerate mutase family. Monomer. The cofactor is Mn(2+).

It catalyses the reaction (2R)-2-phosphoglycerate = (2R)-3-phosphoglycerate. It functions in the pathway carbohydrate degradation; glycolysis; pyruvate from D-glyceraldehyde 3-phosphate: step 3/5. Catalyzes the interconversion of 2-phosphoglycerate and 3-phosphoglycerate. This is 2,3-bisphosphoglycerate-independent phosphoglycerate mutase from Trichodesmium erythraeum (strain IMS101).